The chain runs to 129 residues: Serum amyloid A protein (129 aa).

The signal sequence occupies residues 1–18 (MKLFPGLLFCSLVLGVSG). The residue at position 19 (Gln-19) is a Pyrrolidone carboxylic acid. The interval 92–129 (GDSGHGAEDSKADQAANEWGRSGKDPNHFRPAGLPDKY) is disordered. The propeptide at 112–129 (RSGKDPNHFRPAGLPDKY) is often cleaved during amyloidogenesis.

Belongs to the SAA family. Post-translationally, this protein is the precursor of amyloid protein A, which is formed by the removal of residues from the C-terminal end. As to expression, expressed by the liver; secreted in plasma.

The protein localises to the secreted. Its function is as follows. Major acute phase reactant. Apolipoprotein of the HDL complex. This Canis lupus familiaris (Dog) protein is Serum amyloid A protein (SAA1).